Consider the following 157-residue polypeptide: MFDILMYLFENYVHSEVELLVDEDELTKELTRAGFHQSEILKALTWLERLAELQEGDKPYLCNHDQHSFRIYTKDEMDKLDVESRGFLLFLEQVKVLNVETREMVIDRVMELDEPTLILEDLKWVILMVLFNAPGHESAYEQMEDLIFEQPEGRLHS.

The protein belongs to the Smg family.

This is Protein Smg homolog from Shewanella putrefaciens (strain CN-32 / ATCC BAA-453).